We begin with the raw amino-acid sequence, 303 residues long: UDP-3-O-acyl-N-acetylglucosamine deacetylase (303 aa).

Zn(2+)-binding residues include His-78, His-237, and Asp-241. The Proton donor role is filled by His-264.

It belongs to the LpxC family. Requires Zn(2+) as cofactor.

It catalyses the reaction a UDP-3-O-[(3R)-3-hydroxyacyl]-N-acetyl-alpha-D-glucosamine + H2O = a UDP-3-O-[(3R)-3-hydroxyacyl]-alpha-D-glucosamine + acetate. It participates in glycolipid biosynthesis; lipid IV(A) biosynthesis; lipid IV(A) from (3R)-3-hydroxytetradecanoyl-[acyl-carrier-protein] and UDP-N-acetyl-alpha-D-glucosamine: step 2/6. Its function is as follows. Catalyzes the hydrolysis of UDP-3-O-myristoyl-N-acetylglucosamine to form UDP-3-O-myristoylglucosamine and acetate, the committed step in lipid A biosynthesis. In Stenotrophomonas maltophilia (strain R551-3), this protein is UDP-3-O-acyl-N-acetylglucosamine deacetylase.